The primary structure comprises 427 residues: Histidine--tRNA ligase (427 aa).

Belongs to the class-II aminoacyl-tRNA synthetase family. In terms of assembly, homodimer.

Its subcellular location is the cytoplasm. It carries out the reaction tRNA(His) + L-histidine + ATP = L-histidyl-tRNA(His) + AMP + diphosphate + H(+). This Aster yellows witches'-broom phytoplasma (strain AYWB) protein is Histidine--tRNA ligase.